A 216-amino-acid polypeptide reads, in one-letter code: Adenylate kinase (216 aa).

Residue 10–15 (GAGKGT) coordinates ATP. The tract at residues 30-59 (STGDMFRAAMKAETEMGLQAKSFIDKGALV) is NMP. Residues Thr-31, Arg-36, 57-59 (ALV), 85-88 (GFPR), and Gln-92 each bind AMP. The interval 126–163 (GRRICKECGATYHLEFNPPAKADVCDKCGGELYQRSDD) is LID. Arg-127 provides a ligand contact to ATP. Zn(2+)-binding residues include Cys-130 and Cys-133. 136 to 137 (TY) contacts ATP. Residues Cys-150 and Cys-153 each contribute to the Zn(2+) site. AMP-binding residues include Arg-160 and Arg-171. ATP is bound at residue Gln-199.

It belongs to the adenylate kinase family. In terms of assembly, monomer.

It localises to the cytoplasm. It catalyses the reaction AMP + ATP = 2 ADP. It participates in purine metabolism; AMP biosynthesis via salvage pathway; AMP from ADP: step 1/1. Its function is as follows. Catalyzes the reversible transfer of the terminal phosphate group between ATP and AMP. Plays an important role in cellular energy homeostasis and in adenine nucleotide metabolism. This is Adenylate kinase from Bacillus cereus (strain B4264).